Reading from the N-terminus, the 468-residue chain is UDP-N-acetylmuramoyl-L-alanine--L-glutamate ligase (468 aa).

ATP is bound at residue 122 to 128 (GTKGKST).

It belongs to the MurCDEF family. MurD2 subfamily.

It is found in the cytoplasm. It carries out the reaction UDP-N-acetyl-alpha-D-muramoyl-L-alanine + L-glutamate + ATP = UDP-N-acetyl-alpha-D-muramoyl-L-alanyl-L-glutamate + ADP + phosphate + H(+). It functions in the pathway cell wall biogenesis; peptidoglycan biosynthesis. Functionally, cell wall formation. Catalyzes the addition of L-glutamate to the nucleotide precursor UDP-N-acetylmuramoyl-L-alanine. The polypeptide is UDP-N-acetylmuramoyl-L-alanine--L-glutamate ligase (Xanthomonas euvesicatoria pv. vesicatoria (strain 85-10) (Xanthomonas campestris pv. vesicatoria)).